Here is a 396-residue protein sequence, read N- to C-terminus: Trypacidin cluster transcription factor (396 aa).

A DNA-binding region (zn(2)-C6 fungal-type) is located at residues 20–47 (CRACGLSKVRCSKEKPTCSRCRRRGTVC). Disordered regions lie at residues 54–120 (RPGR…LSTV), 190–218 (DPAP…ESEA), and 346–365 (MHGA…PAPL). Over residues 57–71 (RKPDSRSEVEPEPGH) the composition is skewed to basic and acidic residues. Positions 72–82 (LSHPLPSPESS) are enriched in low complexity.

As to expression, specifically expressed in conidia.

Its subcellular location is the nucleus. Its function is as follows. Transcription factor that regulates the expression of the gene clusters that mediate the biosynthesis of trypacidin, a metabolite with antiprotozoal activity and a possible role in the infection process. Trypacidin is toxic for human pulmonary and bronchial epithelial cells by initiating the intracellular formation of nitric oxide (NO) and hydrogen peroxide (H(2)O(2)), thus triggering host necrotic cell death. In Aspergillus fumigatus (strain ATCC MYA-4609 / CBS 101355 / FGSC A1100 / Af293) (Neosartorya fumigata), this protein is Trypacidin cluster transcription factor.